The sequence spans 201 residues: Imidazoleglycerol-phosphate dehydratase (201 aa).

The protein belongs to the imidazoleglycerol-phosphate dehydratase family.

It is found in the cytoplasm. It catalyses the reaction D-erythro-1-(imidazol-4-yl)glycerol 3-phosphate = 3-(imidazol-4-yl)-2-oxopropyl phosphate + H2O. It participates in amino-acid biosynthesis; L-histidine biosynthesis; L-histidine from 5-phospho-alpha-D-ribose 1-diphosphate: step 6/9. The chain is Imidazoleglycerol-phosphate dehydratase from Prochlorococcus marinus (strain MIT 9515).